A 420-amino-acid chain; its full sequence is 4-hydroxy-3-methylbut-2-en-1-yl diphosphate synthase (flavodoxin) (420 aa).

Cys307, Cys310, Cys353, and Glu360 together coordinate [4Fe-4S] cluster.

Belongs to the IspG family. Requires [4Fe-4S] cluster as cofactor.

It carries out the reaction (2E)-4-hydroxy-3-methylbut-2-enyl diphosphate + oxidized [flavodoxin] + H2O + 2 H(+) = 2-C-methyl-D-erythritol 2,4-cyclic diphosphate + reduced [flavodoxin]. It participates in isoprenoid biosynthesis; isopentenyl diphosphate biosynthesis via DXP pathway; isopentenyl diphosphate from 1-deoxy-D-xylulose 5-phosphate: step 5/6. In terms of biological role, converts 2C-methyl-D-erythritol 2,4-cyclodiphosphate (ME-2,4cPP) into 1-hydroxy-2-methyl-2-(E)-butenyl 4-diphosphate. This Brucella abortus (strain S19) protein is 4-hydroxy-3-methylbut-2-en-1-yl diphosphate synthase (flavodoxin).